The chain runs to 260 residues: BTB/POZ domain-containing protein KCTD21 (260 aa).

Positions 3–72 (DPITLNVGGK…LRTSHLDLPE (70 aa)) constitute a BTB domain. A coiled-coil region spans residues 88–112 (QVQPLIEALQEKEVELSKAEKNAML).

As to quaternary structure, homopentamer. Interacts with KCTD11; KCTD21 and KCTD11 may associate in pentameric assemblies. Interacts (via BTB domain) with CUL3; indicative for a participation in a BCR (BTB-CUL3-RBX1) E3 ubiquitin-protein ligase complex. As to expression, highly expressed in cerebellum and brain. Expression is down-regulated in medulloblastoma.

Its pathway is protein modification; protein ubiquitination. Functionally, probable substrate-specific adapter of a BCR (BTB-CUL3-RBX1) E3 ubiquitin-protein ligase complex mediating the ubiquitination and subsequent proteasomal degradation of target proteins. Promotes the ubiquitination of HDAC1. Can function as antagonist of the Hedgehog pathway by affecting the nuclear transfer of transcription factor GLI1; the function probably occurs via HDAC1 down-regulation, keeping GLI1 acetylated and inactive. Inhibits cell growth and tumorigenicity of medulloblastoma (MDB). This is BTB/POZ domain-containing protein KCTD21 (KCTD21) from Homo sapiens (Human).